The sequence spans 338 residues: Tetraacyldisaccharide 4'-kinase (338 aa).

49–56 is an ATP binding site; the sequence is TVGGTGKT.

Belongs to the LpxK family.

The catalysed reaction is a lipid A disaccharide + ATP = a lipid IVA + ADP + H(+). It participates in glycolipid biosynthesis; lipid IV(A) biosynthesis; lipid IV(A) from (3R)-3-hydroxytetradecanoyl-[acyl-carrier-protein] and UDP-N-acetyl-alpha-D-glucosamine: step 6/6. In terms of biological role, transfers the gamma-phosphate of ATP to the 4'-position of a tetraacyldisaccharide 1-phosphate intermediate (termed DS-1-P) to form tetraacyldisaccharide 1,4'-bis-phosphate (lipid IVA). This is Tetraacyldisaccharide 4'-kinase from Geobacter metallireducens (strain ATCC 53774 / DSM 7210 / GS-15).